Here is a 414-residue protein sequence, read N- to C-terminus: 2,3-diketo-5-methylthiopentyl-1-phosphate enolase (414 aa).

Lys-99 serves as the catalytic Proton acceptor. Substrate contacts are provided by residues Lys-148, 174–177, His-265, Gly-338, and 360–361; these read KDDE and GG. Mg(2+) is bound by residues Lys-174, Asp-176, and Glu-177. Lys-174 carries the N6-carboxylysine modification.

The protein belongs to the RuBisCO large chain family. Type IV subfamily. Homodimer. Mg(2+) serves as cofactor.

The catalysed reaction is 5-methylsulfanyl-2,3-dioxopentyl phosphate = 2-hydroxy-5-methylsulfanyl-3-oxopent-1-enyl phosphate. The protein operates within amino-acid biosynthesis; L-methionine biosynthesis via salvage pathway; L-methionine from S-methyl-5-thio-alpha-D-ribose 1-phosphate: step 3/6. Its function is as follows. Catalyzes the enolization of 2,3-diketo-5-methylthiopentyl-1-phosphate (DK-MTP-1-P) into 2-hydroxy-3-keto-5-methylthiopentenyl-1-phosphate (HK-MTPenyl-1-P). This Bacillus cereus (strain ATCC 14579 / DSM 31 / CCUG 7414 / JCM 2152 / NBRC 15305 / NCIMB 9373 / NCTC 2599 / NRRL B-3711) protein is 2,3-diketo-5-methylthiopentyl-1-phosphate enolase.